A 432-amino-acid chain; its full sequence is Non-peptidase homolog YmxG (432 aa).

Positions 1-20 are cleaved as a signal peptide; that stretch reads MKKFLITLLLGVFMGLQASA.

The protein belongs to the peptidase M16 family.

It is found in the secreted. In terms of biological role, may contribute to the full activity of the protease PqqE. This chain is Non-peptidase homolog YmxG, found in Helicobacter pylori (strain ATCC 700392 / 26695) (Campylobacter pylori).